Consider the following 118-residue polypeptide: UPF0102 protein CHY_1414 (118 aa).

The protein belongs to the UPF0102 family.

The chain is UPF0102 protein CHY_1414 from Carboxydothermus hydrogenoformans (strain ATCC BAA-161 / DSM 6008 / Z-2901).